The sequence spans 715 residues: Scinderin (715 aa).

Residues 1-363 are actin-severing; the sequence is MARELYHEEF…DGFGKVYVTE (363 aa). The stretch at 27–76 is one Gelsolin-like 1 repeat; it reads LELVPVPQSAHGDFYVGDAYLVLHTAKTSRGFTYHLHFWLGKECSQDEST. Y102 bears the Phosphotyrosine mark. Residues 112–119 and 138–146 contribute to the a 1,2-diacyl-sn-glycero-3-phospho-(1D-myo-inositol-4,5-bisphosphate) site; these read KGGLKYKA and RLLHVKGRR. Gelsolin-like repeat units lie at residues 148-188, 265-307, 398-451, and 523-564; these read VRAT…YERL, VVAE…QERK, VEIW…DELT, and TRIV…EEEK. The tract at residues 364–715 is ca(2+)-dependent actin binding; the sequence is KVAQIKQIPF…WFLGWDSSKW (352 aa). Positions 538, 539, and 562 each coordinate Ca(2+). The residue at position 599 (Y599) is a Phosphotyrosine. The stretch at 626–668 is one Gelsolin-like 6 repeat; sequence FVIEEIPGEFTQDDLAEDDVMLLDAWEQIFIWIGKDANEVEKK. Residues D643, D644, and E666 each contribute to the Ca(2+) site.

Belongs to the villin/gelsolin family. Expressed in megakaryocytes.

It localises to the cytoplasm. The protein resides in the cytoskeleton. It is found in the cell projection. The protein localises to the podosome. Its function is as follows. Ca(2+)-dependent actin filament-severing protein that has a regulatory function in exocytosis by affecting the organization of the microfilament network underneath the plasma membrane. Severing activity is inhibited by phosphatidylinositol 4,5-bis-phosphate (PIP2). In vitro, also has barbed end capping and nucleating activities in the presence of Ca(2+). Required for megakaryocyte differentiation, maturation, polyploidization and apoptosis with the release of platelet-like particles. Plays a role in osteoclastogenesis (OCG) and actin cytoskeletal organization in osteoclasts. Regulates chondrocyte proliferation and differentiation. Inhibits cell proliferation and tumorigenesis. Signaling is mediated by MAPK, p38 and JNK pathways. This Homo sapiens (Human) protein is Scinderin.